The primary structure comprises 709 residues: ATP-binding cassette sub-family F member 3 (709 aa).

N-acetylalanine is present on A2. Position 83 is a phosphoserine (S83). A compositionally biased stretch (basic and acidic residues) spans R129–L143. The segment at R129–G171 is disordered. Residues S155, S157, and S161 each carry the phosphoserine modification. Residues S161–G171 show a composition bias toward basic and acidic residues. ABC transporter domains are found at residues V178–Q424 and L492–G707. ATP is bound at residue G210–T217. S283 is subject to Phosphoserine. An ATP-binding site is contributed by G525–S532.

The protein belongs to the ABC transporter superfamily. ABCF family. EF3 subfamily.

In terms of biological role, displays an antiviral effect against flaviviruses such as west Nile virus (WNV) in the presence of OAS1B. This chain is ATP-binding cassette sub-family F member 3 (ABCF3), found in Homo sapiens (Human).